The chain runs to 292 residues: GTP cyclohydrolase FolE2 (292 aa).

Belongs to the GTP cyclohydrolase IV family.

It carries out the reaction GTP + H2O = 7,8-dihydroneopterin 3'-triphosphate + formate + H(+). It participates in cofactor biosynthesis; 7,8-dihydroneopterin triphosphate biosynthesis; 7,8-dihydroneopterin triphosphate from GTP: step 1/1. In terms of biological role, converts GTP to 7,8-dihydroneopterin triphosphate. This Staphylococcus aureus (strain Newman) protein is GTP cyclohydrolase FolE2.